The following is a 176-amino-acid chain: Acireductone dioxygenase (176 aa).

Residues H81, H83, E87, and H126 each coordinate Fe(2+). 4 residues coordinate Ni(2+): H81, H83, E87, and H126.

This sequence belongs to the acireductone dioxygenase (ARD) family. The cofactor is Fe(2+). Requires Ni(2+) as cofactor.

It localises to the cytoplasm. It is found in the nucleus. The enzyme catalyses 1,2-dihydroxy-5-(methylsulfanyl)pent-1-en-3-one + O2 = 4-methylsulfanyl-2-oxobutanoate + formate + 2 H(+). It catalyses the reaction 1,2-dihydroxy-5-(methylsulfanyl)pent-1-en-3-one + O2 = 3-(methylsulfanyl)propanoate + CO + formate + 2 H(+). It functions in the pathway amino-acid biosynthesis; L-methionine biosynthesis via salvage pathway; L-methionine from S-methyl-5-thio-alpha-D-ribose 1-phosphate: step 5/6. Functionally, catalyzes 2 different reactions between oxygen and the acireductone 1,2-dihydroxy-3-keto-5-methylthiopentene (DHK-MTPene) depending upon the metal bound in the active site. Fe-containing acireductone dioxygenase (Fe-ARD) produces formate and 2-keto-4-methylthiobutyrate (KMTB), the alpha-ketoacid precursor of methionine in the methionine recycle pathway. Ni-containing acireductone dioxygenase (Ni-ARD) produces methylthiopropionate, carbon monoxide and formate, and does not lie on the methionine recycle pathway. The sequence is that of Acireductone dioxygenase (adi1) from Sclerotinia sclerotiorum (strain ATCC 18683 / 1980 / Ss-1) (White mold).